Here is a 345-residue protein sequence, read N- to C-terminus: Ubiquinone biosynthesis O-methyltransferase, mitochondrial (345 aa).

A mitochondrion-targeting transit peptide spans 1-86 (MWRGGRLSSR…TYRSSWKKLY (86 aa)). Arginine 124 is an S-adenosyl-L-methionine binding site. 2 positions are modified to N6-acetyllysine: lysine 143 and lysine 149. 2 residues coordinate S-adenosyl-L-methionine: glycine 154 and aspartate 175. Lysine 196 carries the post-translational modification N6-acetyllysine. S-adenosyl-L-methionine is bound at residue serine 222. 3 residues coordinate Mg(2+): glutamate 223, glutamate 226, and histidine 227.

Belongs to the class I-like SAM-binding methyltransferase superfamily. UbiG/COQ3 family. As to quaternary structure, component of a multi-subunit COQ enzyme complex, composed of at least COQ3, COQ4, COQ5, COQ6, COQ7 and COQ9. Mg(2+) serves as cofactor.

It is found in the mitochondrion inner membrane. It carries out the reaction 3,4-dihydroxy-5-(all-trans-decaprenyl)benzoate + S-adenosyl-L-methionine = 4-hydroxy-3-methoxy-5-(all-trans-decaprenyl)benzoate + S-adenosyl-L-homocysteine + H(+). It catalyses the reaction a 3-demethylubiquinone + S-adenosyl-L-methionine = a ubiquinone + S-adenosyl-L-homocysteine. The catalysed reaction is 3-demethylubiquinol-10 + S-adenosyl-L-methionine = ubiquinol-10 + S-adenosyl-L-homocysteine + H(+). It participates in cofactor biosynthesis; ubiquinone biosynthesis. Functionally, O-methyltransferase required for two non-consecutive steps during ubiquinone biosynthesis. Catalyzes the 2 O-methylation of 3,4-dihydroxy-5-(all-trans-decaprenyl)benzoic acid into 4-hydroxy-3-methoxy-5-(all-trans-decaprenyl)benzoic acid. Also catalyzes the last step of ubiquinone biosynthesis by mediating methylation of 3-demethylubiquinone into ubiquinone. Also able to mediate the methylation of 3-demethylubiquinol-10 into ubiquinol-10. In Rattus norvegicus (Rat), this protein is Ubiquinone biosynthesis O-methyltransferase, mitochondrial.